Reading from the N-terminus, the 439-residue chain is Phosphomethylpyrimidine synthase (439 aa).

Residues asparagine 67, methionine 96, tyrosine 126, histidine 165, 187–189, 228–231, and glutamate 267 contribute to the substrate site; these read SRG and DSLR. Histidine 271 lines the Zn(2+) pocket. Position 294 (tyrosine 294) interacts with substrate. Histidine 335 contributes to the Zn(2+) binding site. Cysteine 411, cysteine 414, and cysteine 418 together coordinate [4Fe-4S] cluster.

It belongs to the ThiC family. [4Fe-4S] cluster is required as a cofactor.

The enzyme catalyses 5-amino-1-(5-phospho-beta-D-ribosyl)imidazole + S-adenosyl-L-methionine = 4-amino-2-methyl-5-(phosphooxymethyl)pyrimidine + CO + 5'-deoxyadenosine + formate + L-methionine + 3 H(+). Its pathway is cofactor biosynthesis; thiamine diphosphate biosynthesis. Functionally, catalyzes the synthesis of the hydroxymethylpyrimidine phosphate (HMP-P) moiety of thiamine from aminoimidazole ribotide (AIR) in a radical S-adenosyl-L-methionine (SAM)-dependent reaction. The sequence is that of Phosphomethylpyrimidine synthase from Ignicoccus hospitalis (strain KIN4/I / DSM 18386 / JCM 14125).